The chain runs to 427 residues: MKLLTNANTLKGTIRVPGDKSISHRAIIFGSISQGVTRIVDVLRGEDVLSTIEAFKQMGVLIEDDGEIITIYGKGFAGLTQPNNLLDMGNSGTSMRLIAGVLAGQEFEVTMVGDNSLSKRPMDRIALPLSKMGARISGVTNRDLPPLKLQGTKKLKPIFYHLPVASAQVKSALIFAALQTKGESLIVEKEQTRNHTEDMIRQFGGHLDIKDKEIRLNGGQSLVGQDIRVPGDISSAAFWIVVGLIIPNSHIILENVGINETRTGILDVVSKMGGKIKLSSVDNQVKSATLTVDYSHLQATHISGAMIPRLIDELPIIALLATQAQGTTVIADAQELKVKETDRIQVVVESLKQMGADITATADGMIIRGNTPLHAASLDCHGDHRIGMMIAIAALLVKEGEVDLSGEEAINTSYPNFLEHLEGLVNA.

3-phosphoshikimate-binding residues include K20, S21, and R25. K20 contributes to the phosphoenolpyruvate binding site. G92 and R120 together coordinate phosphoenolpyruvate. Positions 166, 168, 312, and 339 each coordinate 3-phosphoshikimate. Q168 is a binding site for phosphoenolpyruvate. Residue D312 is the Proton acceptor of the active site. The phosphoenolpyruvate site is built by R343 and R385.

This sequence belongs to the EPSP synthase family. Monomer.

The protein localises to the cytoplasm. The enzyme catalyses 3-phosphoshikimate + phosphoenolpyruvate = 5-O-(1-carboxyvinyl)-3-phosphoshikimate + phosphate. Its pathway is metabolic intermediate biosynthesis; chorismate biosynthesis; chorismate from D-erythrose 4-phosphate and phosphoenolpyruvate: step 6/7. In terms of biological role, catalyzes the transfer of the enolpyruvyl moiety of phosphoenolpyruvate (PEP) to the 5-hydroxyl of shikimate-3-phosphate (S3P) to produce enolpyruvyl shikimate-3-phosphate and inorganic phosphate. This Streptococcus agalactiae serotype III (strain NEM316) protein is 3-phosphoshikimate 1-carboxyvinyltransferase.